The sequence spans 374 residues: Tuliposide A-converting enzyme b3, amyloplastic (374 aa).

An amyloplast-targeting transit peptide spans 1-68 (MSAALFCGPP…TNSSLSPSPT (68 aa)). The active-site Acyl-ester intermediate is S226. Active-site charge relay system residues include D316 and H348.

The protein belongs to the AB hydrolase superfamily. In terms of assembly, homodimer. Highly expressed in pistil and bulb scales. Lower expression in stem, and barely detected in root, leaf, petal and stamen.

Its subcellular location is the plastid. The protein localises to the amyloplast. The enzyme catalyses 6-tuliposide A = tulipalin A + D-glucose. Its function is as follows. Lactone-forming carboxylesterases, specifically catalyzing intramolecular transesterification, but not hydrolysis. Involved in the biosynthesis of tulipalins, defensive chemicals that show antimicrobial activities against a broad range of strains of bacteria and fungi. Substrates are 6-tuliposide A &gt; 6-tuliposide B. The polypeptide is Tuliposide A-converting enzyme b3, amyloplastic (TCEA-B3) (Tulipa gesneriana (Garden tulip)).